Reading from the N-terminus, the 38-residue chain is Potassium channel toxin alpha-KTx 3.17 (38 aa).

3 cysteine pairs are disulfide-bonded: C8–C28, C14–C33, and C18–C35.

The protein belongs to the short scorpion toxin superfamily. Potassium channel inhibitor family. Alpha-KTx 03 subfamily. As to expression, expressed by the venom gland.

It localises to the secreted. Functionally, completely inhibits the (125)I-kaliotoxin binding on rat brain synaptosomes with high-affinity (IC(50)=0.1 nM). Is a potent Kv1.3/KCNA3 ligand. This Buthus paris (Scorpion) protein is Potassium channel toxin alpha-KTx 3.17.